A 488-amino-acid polypeptide reads, in one-letter code: MNLTEICDNAKKGREYALLGNYDSSMVYYQGVIQQIHKHCQSLRDPAQKVKWQQVRQELAEEYEQVKSIVSTLESFKVDKAVDFPNPVPEEGPRDPDVWPPPTPAEHRGPVQVKKPVPLSKPQRKESPGMQHRGAVGRGQANIKPDRPNTRDGRGNKAKEEKSKRNAQEGAADVEQKKFDGTGYDSDLVDALERDIVSRNPNIHWDDIADLEDAKKLLREAVVLPMWMPDFFKGIRRPWKGVLMVGPPGTGKTMLAKAVATECGTTFFNVSSSTLTSKYRGESEKLVRLLFEMARFYAPTTIFIDEIDSICGRRGTSDEHEASRRVKSELLVQMDGVGGAQESEDPSKMVMVLAATNFPWDIDEALRRRLEKRIYIPLPTAKGRAELLKINLREVDVASDVDLTVFAEKIEGYSGADITNVCRDASMMAMRRRIQGLSPEEIRALSKDELQMPVTMEDFELALKKISKSVSAADLEKYESWMSEFGSV.

The tract at residues 84–184 (FPNPVPEEGP…EQKKFDGTGY (101 aa)) is disordered. Over residues 144–167 (KPDRPNTRDGRGNKAKEEKSKRNA) the composition is skewed to basic and acidic residues. 246–253 (GPPGTGKT) contributes to the ATP binding site.

It belongs to the AAA ATPase family. Katanin p60 subunit A1 subfamily. A-like 1 sub-subfamily.

It localises to the cytoplasm. It is found in the cytoskeleton. Its subcellular location is the spindle pole. The protein localises to the spindle. It carries out the reaction n ATP + n H2O + a microtubule = n ADP + n phosphate + (n+1) alpha/beta tubulin heterodimers.. Functionally, regulates microtubule dynamics in Sertoli cells, a process that is essential for spermiogenesis and male fertility. Severs microtubules in an ATP-dependent manner, promoting rapid reorganization of cellular microtubule arrays. This Danio rerio (Zebrafish) protein is Katanin p60 ATPase-containing subunit A-like 1 (katnal1).